The following is a 320-amino-acid chain: MNNHKKLGILLANLGTPQAPTSQAVKAFLSQFLHDQRVVDMSRWLWCPLLHGIILPTRSPKVAKLYQSIWMDEGSPLMVYSRRQRDKLAELSQRPVELGMTYGEPSLLEGVRKLQQQGVEQIVVLPLYPQYSATTTAAVFDGLAKALRQLPVVPELHFIRDYHDHPLYIQALAKSVRASWQQHGQGDLLLCSYHGIPKRYAQNGDIYPEHCLKTTELLAQALGLPQDKVMMTYQSQFGKEEWLQPYTDKTMEALPRQGIKKLDVICPAFSVDCLETLEEIAEQNQEIFLHSGGEAFHYVPCLNDSQSHIELMAALVKVDC.

Residues H194 and E275 each contribute to the Fe cation site.

It belongs to the ferrochelatase family.

The protein resides in the cytoplasm. It catalyses the reaction heme b + 2 H(+) = protoporphyrin IX + Fe(2+). It participates in porphyrin-containing compound metabolism; protoheme biosynthesis; protoheme from protoporphyrin-IX: step 1/1. Its function is as follows. Catalyzes the ferrous insertion into protoporphyrin IX. In Vibrio cholerae serotype O1 (strain ATCC 39315 / El Tor Inaba N16961), this protein is Ferrochelatase.